A 358-amino-acid chain; its full sequence is Uptake hydrogenase small subunit (358 aa).

A signal peptide (tat-type signal) is located at residues 1-45 (MSRLETFYDVMRRQGITRRSFLKYCSLTAAALGLGPAFAPRIAHA). [4Fe-4S] cluster is bound by residues C62, C65, C160, C194, H232, C235, C260, and C266. 3 residues coordinate [3Fe-4S] cluster: C275, C294, and C297.

The protein belongs to the [NiFe]/[NiFeSe] hydrogenase small subunit family. Heterodimer of a large and a small subunit. [4Fe-4S] cluster is required as a cofactor. It depends on [3Fe-4S] cluster as a cofactor. In terms of processing, predicted to be exported by the Tat system. The position of the signal peptide cleavage has been experimentally proven.

It is found in the cell membrane. The catalysed reaction is H2 + A = AH2. Functionally, this enzyme recycles the H(2) produced by nitrogenase to increase the production of ATP and to protect nitrogenase against inhibition or damage by O(2) under carbon- or phosphate-limited conditions. The protein is Uptake hydrogenase small subunit (hoxK) of Azotobacter vinelandii.